Here is an 894-residue protein sequence, read N- to C-terminus: Probable ion channel SYM8 (894 aa).

The interval 1-124 is disordered; sequence MAKSNEEPNS…PPSLPIAITK (124 aa). Composition is skewed to polar residues over residues 7 to 16, 24 to 33, and 44 to 63; these read EPNSNLNTNK, TLAQQPSLNL, and IGNS…QRNY. Transmembrane regions (helical) follow at residues 134-154, 204-224, 267-287, and 319-339; these read SPIF…SAFL, TISL…YKYI, LALL…LYAV, and IVSV…LGLV. 2 RCK N-terminal domains span residues 360–501 and 620–769; these read RNHV…ETVV and PEKI…DKSI. Residues 390–415 are a coiled coil; that stretch reads VIVVLAEKEKEEMEMDIAKLEFDFMG.

The protein belongs to the castor/pollux (TC 1.A.1.23) family. As to quaternary structure, homotetramer.

It is found in the nucleus membrane. Functionally, required for both rhizobial and mycorrhizal symbiosis. Involved in Nod-factor-induced calcium spiking. May induce a change in membrane polarization that activates the opening of a calcium channel required for calcium spiking. Might be calcium gated. This Pisum sativum (Garden pea) protein is Probable ion channel SYM8 (SYM8).